Consider the following 56-residue polypeptide: MFLRFYNRLLYIYNELFNFLRFTVFLPFCEFVPHHDLFYLIVTYQRTLVYKHKNDC.

This is an uncharacterized protein from Saccharomyces cerevisiae (strain ATCC 204508 / S288c) (Baker's yeast).